The following is a 564-amino-acid chain: E3 ubiquitin-protein ligase TRIM16 (564 aa).

The disordered stretch occupies residues 1–70 (MAELDLMAPG…DPAEQGDPAG (70 aa)). Positions 24–39 (SPDSGSPSPDSGSASP) are enriched in low complexity. 2 consecutive B box-type zinc fingers follow at residues 72 to 122 (GKEV…LTEP) and 126 to 165 (HNWRYCPAHHSPLSAFCCPDQQCICQDCCQEHSGHTIVSL). A Phosphoserine modification is found at S116. Positions 131, 134, 153, and 157 each coordinate Zn(2+). 3 coiled-coil regions span residues 165-203 (LDAARRDKEAELQCTQLDLERKLKLNENAISRLQANQKS), 243-274 (AALSQANGIKAHLEYRSAEMEKSKQELERMAA), and 320-340 (HLIQLLENYKKKLQEFSKEEE). S203 is subject to Phosphoserine. The B30.2/SPRY domain occupies 355–553 (YWTSKPEPST…RIVDLGEEPE (199 aa)).

This sequence belongs to the TRIM/RBCC family. As to quaternary structure, homodimerizes via its coiled-coil domain. Heterodimerizes with MID1, TRIM24 and PML. Interacts with Galectin-3/LGALS3 in a ULK1-dependent manner; this interaction mediates autophagy of damage endomembranes. Interacts with BECN1. Interacts with ATG16L1. Interacts with p62/SQSTM and LC3B/MAP1LC3B. Phosphorylated by ULK1. Post-translationally, auto-ubiquitinates via its B-Boxes.

Its subcellular location is the cytoplasm. It catalyses the reaction S-ubiquitinyl-[E2 ubiquitin-conjugating enzyme]-L-cysteine + [acceptor protein]-L-lysine = [E2 ubiquitin-conjugating enzyme]-L-cysteine + N(6)-ubiquitinyl-[acceptor protein]-L-lysine.. In terms of biological role, E3 ubiquitin ligase that plays an essential role in the organization of autophagic response and ubiquitination upon lysosomal and phagosomal damages. Plays a role in the stress-induced biogenesis and degradation of protein aggresomes by regulating the p62-KEAP1-NRF2 signaling and particularly by modulating the ubiquitination levels and thus stability of NRF2. Acts as a scaffold protein and facilitates autophagic degradation of protein aggregates by interacting with p62/SQSTM, ATG16L1 and LC3B/MAP1LC3B. In turn, protects the cell against oxidative stress-induced cell death as a consequence of endomembrane damage. This chain is E3 ubiquitin-protein ligase TRIM16 (TRIM16), found in Pongo abelii (Sumatran orangutan).